The chain runs to 1187 residues: DENN domain and WD repeat-containing protein SCD1 (1187 aa).

Positions 19 to 179 (TVDGDLGFHG…NVPLPTPGKD (161 aa)) constitute a uDENN domain. The cDENN domain maps to 199–330 (SLPQADISLQ…EFSTLRNDIL (132 aa)). A dDENN domain is found at 332–437 (LLHPNVVAID…ERRLSSDEKS (106 aa)). Disordered stretches follow at residues 508–536 (SGAL…SSME) and 765–793 (SAGL…GRSW). Residues 526–536 (NTKEDNFSSME) show a composition bias toward basic and acidic residues. Residues 779 to 793 (SDETQQPSEASGRSW) are compositionally biased toward polar residues. WD repeat units lie at residues 841 to 892 (GHGG…SELR), 897 to 934 (GHTG…LLEE), 937 to 975 (GHDS…CVAT), 978 to 1017 (RCSS…QMHK), 1020 to 1057 (GHTK…CDAV), 1060 to 1099 (CHAG…IKCV), 1104 to 1141 (LHSS…GTKV), and 1152 to 1187 (RTAA…TINI).

In terms of assembly, interacts with FLS2. Expressed in roots, rosette and cauline leaves, buds and flowers.

Its subcellular location is the cell membrane. The protein localises to the cytoplasmic vesicle. The protein resides in the clathrin-coated vesicle. Its function is as follows. Involved in growth and development through its role in cytokinesis and polarized cell expansion. Required for plasma membrane internalization. May function in clathrin-mediated membrane trafficking, including plasma membrane endocytosis, essential to both cytokinesis and cell expansion. Acts as a negative regulator of basal resistance against bacteria. In Arabidopsis thaliana (Mouse-ear cress), this protein is DENN domain and WD repeat-containing protein SCD1.